The sequence spans 398 residues: Tryptophan synthase beta chain (398 aa).

Position 88 is an N6-(pyridoxal phosphate)lysine (Lys88).

Belongs to the TrpB family. In terms of assembly, tetramer of two alpha and two beta chains. Requires pyridoxal 5'-phosphate as cofactor.

It carries out the reaction (1S,2R)-1-C-(indol-3-yl)glycerol 3-phosphate + L-serine = D-glyceraldehyde 3-phosphate + L-tryptophan + H2O. Its pathway is amino-acid biosynthesis; L-tryptophan biosynthesis; L-tryptophan from chorismate: step 5/5. The beta subunit is responsible for the synthesis of L-tryptophan from indole and L-serine. This is Tryptophan synthase beta chain from Histophilus somni (strain 2336) (Haemophilus somnus).